The following is a 357-amino-acid chain: Peptide chain release factor 1 (357 aa).

The residue at position 234 (Gln-234) is an N5-methylglutamine.

Belongs to the prokaryotic/mitochondrial release factor family. Post-translationally, methylated by PrmC. Methylation increases the termination efficiency of RF1.

It is found in the cytoplasm. In terms of biological role, peptide chain release factor 1 directs the termination of translation in response to the peptide chain termination codons UAG and UAA. The protein is Peptide chain release factor 1 of Alkaliphilus oremlandii (strain OhILAs) (Clostridium oremlandii (strain OhILAs)).